The sequence spans 337 residues: MNRVDYLRISLIDRCNFRCQYCMPEGAELDYILRQELLTHEELITLLKEVFIPLGFSKFRLTGGEPLLRPGIVDLVQDIASLPATEDLSMTTNGFLLSSLAEDLYQAGLKRINISLDSLNPDTFQTIIGHKKANMWQQTWLGIQTAYEVGFDPLKLNVVVIPGVNENEIEALAELSIHKNWHIRFIEFMPIGNPELFSDLEEIRFAGRAWVASEEIREKIRQKWGLIESNIKGNGPADVFKIPGAKGTVGFISQMSECFCDRCNRMRLSADGWLRPCLLNETGQIDLKTLLRSGISATNIRDKVAHLLTIKPDINYKQRDSGNDTGIYERTMSQIGG.

Residues 1-226 (MNRVDYLRIS…REKIRQKWGL (226 aa)) enclose the Radical SAM core domain. A GTP-binding site is contributed by Arg8. The [4Fe-4S] cluster site is built by Cys15 and Cys19. Tyr21 contacts S-adenosyl-L-methionine. Cys22 provides a ligand contact to [4Fe-4S] cluster. Arg60 contacts GTP. Gly64 is an S-adenosyl-L-methionine binding site. Thr91 is a binding site for GTP. Residue Ser115 coordinates S-adenosyl-L-methionine. Position 155 (Lys155) interacts with GTP. Residue Met189 participates in S-adenosyl-L-methionine binding. [4Fe-4S] cluster is bound by residues Cys260 and Cys263. 265-267 (RMR) is a binding site for GTP. Cys277 contributes to the [4Fe-4S] cluster binding site.

It belongs to the radical SAM superfamily. MoaA family. In terms of assembly, monomer and homodimer. [4Fe-4S] cluster serves as cofactor.

The enzyme catalyses GTP + AH2 + S-adenosyl-L-methionine = (8S)-3',8-cyclo-7,8-dihydroguanosine 5'-triphosphate + 5'-deoxyadenosine + L-methionine + A + H(+). Its pathway is cofactor biosynthesis; molybdopterin biosynthesis. Functionally, catalyzes the cyclization of GTP to (8S)-3',8-cyclo-7,8-dihydroguanosine 5'-triphosphate. This chain is GTP 3',8-cyclase, found in Crocosphaera subtropica (strain ATCC 51142 / BH68) (Cyanothece sp. (strain ATCC 51142)).